The following is a 267-amino-acid chain: NAD kinase (267 aa).

Asp-45 (proton acceptor) is an active-site residue. NAD(+) is bound by residues Asp-45–Gly-46, Asn-123–Glu-124, Arg-149, Asp-151, Ala-186, and Asn-226.

Belongs to the NAD kinase family. Requires a divalent metal cation as cofactor.

It is found in the cytoplasm. It carries out the reaction NAD(+) + ATP = ADP + NADP(+) + H(+). Functionally, involved in the regulation of the intracellular balance of NAD and NADP, and is a key enzyme in the biosynthesis of NADP. Catalyzes specifically the phosphorylation on 2'-hydroxyl of the adenosine moiety of NAD to yield NADP. The chain is NAD kinase from Shouchella clausii (strain KSM-K16) (Alkalihalobacillus clausii).